We begin with the raw amino-acid sequence, 201 residues long: Large ribosomal subunit protein uL4 (201 aa).

A disordered region spans residues 45-67 (AQKTRAEVTGSGKKPWRQKGTGR).

The protein belongs to the universal ribosomal protein uL4 family. In terms of assembly, part of the 50S ribosomal subunit.

Functionally, one of the primary rRNA binding proteins, this protein initially binds near the 5'-end of the 23S rRNA. It is important during the early stages of 50S assembly. It makes multiple contacts with different domains of the 23S rRNA in the assembled 50S subunit and ribosome. Forms part of the polypeptide exit tunnel. The polypeptide is Large ribosomal subunit protein uL4 (Yersinia enterocolitica serotype O:8 / biotype 1B (strain NCTC 13174 / 8081)).